A 211-amino-acid polypeptide reads, in one-letter code: ATP-dependent Clp protease proteolytic subunit (211 aa).

Ser114 acts as the Nucleophile in catalysis. The active site involves His139.

It belongs to the peptidase S14 family. As to quaternary structure, fourteen ClpP subunits assemble into 2 heptameric rings which stack back to back to give a disk-like structure with a central cavity, resembling the structure of eukaryotic proteasomes.

The protein localises to the cytoplasm. It catalyses the reaction Hydrolysis of proteins to small peptides in the presence of ATP and magnesium. alpha-casein is the usual test substrate. In the absence of ATP, only oligopeptides shorter than five residues are hydrolyzed (such as succinyl-Leu-Tyr-|-NHMec, and Leu-Tyr-Leu-|-Tyr-Trp, in which cleavage of the -Tyr-|-Leu- and -Tyr-|-Trp bonds also occurs).. Cleaves peptides in various proteins in a process that requires ATP hydrolysis. Has a chymotrypsin-like activity. Plays a major role in the degradation of misfolded proteins. This Pseudomonas fluorescens (strain ATCC BAA-477 / NRRL B-23932 / Pf-5) protein is ATP-dependent Clp protease proteolytic subunit.